A 433-amino-acid polypeptide reads, in one-letter code: Enolase (433 aa).

A (2R)-2-phosphoglycerate-binding site is contributed by glutamine 163. Glutamate 205 acts as the Proton donor in catalysis. Positions 241, 289, and 316 each coordinate Mg(2+). (2R)-2-phosphoglycerate-binding residues include lysine 341, arginine 370, serine 371, and lysine 392. The Proton acceptor role is filled by lysine 341.

Belongs to the enolase family. Mg(2+) is required as a cofactor.

It is found in the cytoplasm. It localises to the secreted. Its subcellular location is the cell surface. The enzyme catalyses (2R)-2-phosphoglycerate = phosphoenolpyruvate + H2O. Its pathway is carbohydrate degradation; glycolysis; pyruvate from D-glyceraldehyde 3-phosphate: step 4/5. Functionally, catalyzes the reversible conversion of 2-phosphoglycerate (2-PG) into phosphoenolpyruvate (PEP). It is essential for the degradation of carbohydrates via glycolysis. The protein is Enolase of Treponema denticola (strain ATCC 35405 / DSM 14222 / CIP 103919 / JCM 8153 / KCTC 15104).